Consider the following 506-residue polypeptide: Cobyric acid synthase (506 aa).

Positions 254–453 (DLDIAVIRLP…IHGIFESDSF (200 aa)) constitute a GATase cobBQ-type domain. C334 serves as the catalytic Nucleophile. The active site involves H445.

It belongs to the CobB/CobQ family. CobQ subfamily.

Its pathway is cofactor biosynthesis; adenosylcobalamin biosynthesis. Functionally, catalyzes amidations at positions B, D, E, and G on adenosylcobyrinic A,C-diamide. NH(2) groups are provided by glutamine, and one molecule of ATP is hydrogenolyzed for each amidation. The protein is Cobyric acid synthase of Dehalococcoides mccartyi (strain ATCC BAA-2266 / KCTC 15142 / 195) (Dehalococcoides ethenogenes (strain 195)).